The chain runs to 281 residues: Ribosomal RNA small subunit methyltransferase A (281 aa).

6 residues coordinate S-adenosyl-L-methionine: asparagine 25, leucine 27, glycine 52, glutamate 73, aspartate 99, and asparagine 118.

Belongs to the class I-like SAM-binding methyltransferase superfamily. rRNA adenine N(6)-methyltransferase family. RsmA subfamily.

The protein resides in the cytoplasm. It carries out the reaction adenosine(1518)/adenosine(1519) in 16S rRNA + 4 S-adenosyl-L-methionine = N(6)-dimethyladenosine(1518)/N(6)-dimethyladenosine(1519) in 16S rRNA + 4 S-adenosyl-L-homocysteine + 4 H(+). Functionally, specifically dimethylates two adjacent adenosines (A1518 and A1519) in the loop of a conserved hairpin near the 3'-end of 16S rRNA in the 30S particle. May play a critical role in biogenesis of 30S subunits. The sequence is that of Ribosomal RNA small subunit methyltransferase A from Erythrobacter litoralis (strain HTCC2594).